We begin with the raw amino-acid sequence, 195 residues long: Probable molybdenum cofactor guanylyltransferase (195 aa).

GTP contacts are provided by residues 6–8 (LAG), Lys18, Asp67, and Asp93. Asp93 contributes to the Mg(2+) binding site.

It belongs to the MobA family. Mg(2+) serves as cofactor.

It localises to the cytoplasm. It catalyses the reaction Mo-molybdopterin + GTP + H(+) = Mo-molybdopterin guanine dinucleotide + diphosphate. In terms of biological role, transfers a GMP moiety from GTP to Mo-molybdopterin (Mo-MPT) cofactor (Moco or molybdenum cofactor) to form Mo-molybdopterin guanine dinucleotide (Mo-MGD) cofactor. This chain is Probable molybdenum cofactor guanylyltransferase, found in Thermococcus sibiricus (strain DSM 12597 / MM 739).